Consider the following 378-residue polypeptide: Ribosomal RNA large subunit methyltransferase G (378 aa).

It belongs to the methyltransferase superfamily. RlmG family.

The protein localises to the cytoplasm. It catalyses the reaction guanosine(1835) in 23S rRNA + S-adenosyl-L-methionine = N(2)-methylguanosine(1835) in 23S rRNA + S-adenosyl-L-homocysteine + H(+). In terms of biological role, specifically methylates the guanine in position 1835 (m2G1835) of 23S rRNA. This chain is Ribosomal RNA large subunit methyltransferase G, found in Shewanella baltica (strain OS185).